Consider the following 455-residue polypeptide: Transcription factor mokH (455 aa).

The interval 1–22 (MALSPVQDPPSHTDKTMPRRAF) is disordered. Positions 26–58 (CDRCHAQKIKCIGSEGAVARASCQRCQQAGLRC) form a DNA-binding region, zn(2)-C6 fungal-type. Disordered stretches follow at residues 68 to 113 (KLPK…DSSG) and 296 to 317 (LTPL…RSSV). Polar residues predominate over residues 75-88 (AESSPASSTAGLHT). The segment covering 89-113 (SSSDSSPPVPSDGLPLDLPGPDSSG) has biased composition (low complexity).

It localises to the nucleus. In terms of biological role, transcription factor that regulates the gene cluster that mediates the biosynthesis of monakolin K, also known as lovastatin, and which acts as a potent competitive inhibitor of HMG-CoA reductase. Monakolin K biosynthesis is performed in two stages. The first stage is catalyzed by the nonaketide synthase mokA, which belongs to type I polyketide synthases and catalyzes the iterative nine-step formation of the polyketide. This PKS stage is completed by the action of dehydrogenase mokE, which catalyzes the NADPH-dependent reduction of the unsaturated tetra-, penta- and heptaketide intermediates that arise during the mokA-mediated biosynthesis of the nonaketide chain and leads to dihydromonacolin L. Covalently bound dihydromonacolin L is released from mokA by the mokD esterase. Conversion of dihydromonacolin L into monacolin L and then monacolin J is subsequently performed with the participation of molecular oxygen and P450 monoogygenase mokC. Finally, mokF performs the conversion of monacoline J to monacoline K through the addition of the side-chain diketide moiety (2R)-2-methylbutanoate produced by the diketide synthase mokB. HMG-CoA reductase mokG may act as a down-regulator of monacolin K production. The protein is Transcription factor mokH of Monascus pilosus (Red mold).